A 67-amino-acid polypeptide reads, in one-letter code: Sec-independent protein translocase protein TatA (67 aa).

A helical transmembrane segment spans residues 1 to 21 (MFGLGGQELVLILLIVLLLFG).

Belongs to the TatA/E family. As to quaternary structure, forms a complex with TatC.

The protein localises to the cell inner membrane. Its function is as follows. Part of the twin-arginine translocation (Tat) system that transports large folded proteins containing a characteristic twin-arginine motif in their signal peptide across membranes. TatA could form the protein-conducting channel of the Tat system. This Chlorobaculum tepidum (strain ATCC 49652 / DSM 12025 / NBRC 103806 / TLS) (Chlorobium tepidum) protein is Sec-independent protein translocase protein TatA.